Here is a 104-residue protein sequence, read N- to C-terminus: U-scoloptoxin(10)-Cw1a (104 aa).

Positions 1–23 (MNKTVAVFFAVICVICVIKSCKT) are cleaved as a signal peptide.

It belongs to the scoloptoxin-10 family. Contains 3 disulfide bonds. As to expression, expressed by the venom gland.

The protein resides in the secreted. This is U-scoloptoxin(10)-Cw1a from Cormocephalus westwoodi (Westwood's green centipede).